The sequence spans 309 residues: Elongation factor Ts (309 aa).

The involved in Mg(2+) ion dislocation from EF-Tu stretch occupies residues 82-85 (TDFV).

Belongs to the EF-Ts family.

Its subcellular location is the cytoplasm. Its function is as follows. Associates with the EF-Tu.GDP complex and induces the exchange of GDP to GTP. It remains bound to the aminoacyl-tRNA.EF-Tu.GTP complex up to the GTP hydrolysis stage on the ribosome. This Rickettsia massiliae (strain Mtu5) protein is Elongation factor Ts.